The following is a 183-amino-acid chain: Outer membrane protein H.8 (183 aa).

Residues 1–17 (MKAYLALISAAVIGLAA) form the signal peptide. Cysteine 18 carries N-palmitoyl cysteine lipidation. A lipid anchor (S-diacylglycerol cysteine) is attached at cysteine 18. Residues 27-51 (AEATPAGEAPASEAPAAEAAPADAA) form a disordered region. One can recognise a Plastocyanin-like domain in the interval 57 to 183 (GNCAATVESN…LMNGKVTLVD (127 aa)). The Cu cation site is built by histidine 102, cysteine 166, histidine 171, and methionine 175.

It depends on Cu cation as a cofactor.

The protein resides in the cell outer membrane. The protein is Outer membrane protein H.8 of Neisseria gonorrhoeae.